Here is a 797-residue protein sequence, read N- to C-terminus: Calcium-transporting ATPase CtpE (797 aa).

3 helical membrane-spanning segments follow: residues Leu55–Ile75, Ile215–Leu235, and Val254–Val274. The active-site 4-aspartylphosphate intermediate is the Asp301. Residues Asp301, Thr303, and Asp536 each contribute to the Mg(2+) site. 6 consecutive transmembrane segments (helical) span residues Thr601–Leu621, Ile633–Ala653, Val667–Leu687, Ala703–Ala723, Trp729–Leu749, and Thr764–Ile784.

Belongs to the cation transport ATPase (P-type) (TC 3.A.3) family.

It localises to the cell membrane. The catalysed reaction is Ca(2+)(in) + ATP + H2O = Ca(2+)(out) + ADP + phosphate + H(+). Its function is as follows. P-type ATPase involved in specific uptake of calcium. This is Calcium-transporting ATPase CtpE (ctpE) from Mycobacterium bovis (strain ATCC BAA-935 / AF2122/97).